A 918-amino-acid polypeptide reads, in one-letter code: DNA ligase 1 (918 aa).

Polar residues predominate over residues 1-15 (MQRSIMSFFQPTTTE). The tract at residues 1–271 (MQRSIMSFFQ…DPTNYNPSKS (271 aa)) is disordered. Residues 16–54 (GKAKKPEKEIPSSIREKEPPPKVALKERNRAVPESDSPV) show a composition bias toward basic and acidic residues. 4 positions are modified to phosphoserine: Ser-50, Ser-52, Ser-66, and Ser-67. Thr-78 bears the Phosphothreonine mark. The span at 81–92 (VQKPVSDSKQSS) shows a compositional bias: low complexity. A compositionally biased stretch (polar residues) spans 100 to 114 (PENSPVFNCSPSMDI). Residues 120–130 (PKRRTARKQLP) are compositionally biased toward basic residues. Lys-145 bears the N6-acetyllysine mark. Thr-195 carries the post-translational modification Phosphothreonine. Lys-227 is modified (N6-acetyllysine). Phosphoserine is present on residues Ser-230 and Ser-231. Thr-234 carries the phosphothreonine modification. Positions 240 to 259 (VKTEVKQEESDTPRKEETKG) are enriched in basic and acidic residues. Residue Glu-566 coordinates ATP. The N6-AMP-lysine intermediate role is filled by Lys-568. ATP-binding residues include Arg-573 and Glu-621. Glu-621 is a binding site for Mg(2+). Residues 642-644 (KRK) form an interaction with target DNA region. Position 720 (Glu-720) interacts with Mg(2+). 2 residues coordinate ATP: Lys-725 and Lys-744. Thr-798 is subject to Phosphothreonine. Phosphoserine occurs at positions 801, 908, 909, and 913. The interval 881 to 918 (DKQPEQATTSDQVASLYRKQSQIQNQQSSDLDSDVEDY) is disordered. The segment covering 885–910 (EQATTSDQVASLYRKQSQIQNQQSSD) has biased composition (polar residues).

Belongs to the ATP-dependent DNA ligase family. Interacts with PCNA. Interacts with POLB. Requires Mg(2+) as cofactor.

The protein localises to the nucleus. It catalyses the reaction ATP + (deoxyribonucleotide)n-3'-hydroxyl + 5'-phospho-(deoxyribonucleotide)m = (deoxyribonucleotide)n+m + AMP + diphosphate.. DNA ligase that seals nicks in double-stranded during DNA repair. Also involved in DNA replication and DNA recombination. This Rattus norvegicus (Rat) protein is DNA ligase 1 (Lig1).